A 200-amino-acid chain; its full sequence is Cuticle protein 19.8 (200 aa).

A run of 3 repeats spans residues 20–23, 26–29, and 43–46. Residues 56-127 enclose the Chitin-binding type R&amp;R domain; sequence HPQYSYGYSV…EPGVHAPIAA (72 aa). A disordered region spans residues 70–89; the sequence is TGDSKSQQESRDGDVVQGSY. 5 tandem repeats follow at residues 126-129, 144-147, 150-153, 159-162, and 177-180.

Its function is as follows. Component of the cuticle of migratory locust which contains more than 100 different structural proteins. This is Cuticle protein 19.8 from Locusta migratoria (Migratory locust).